The following is a 367-amino-acid chain: CCCH-type zinc finger protein moe-3 (367 aa).

The segment covering 1–15 (MSKVKGDLEKSDKRP) has biased composition (basic and acidic residues). A disordered region spans residues 1-57 (MSKVKGDLEKSDKRPPSSMSTGSADSGVFSSGVHASSPSHSQGSSSQSGPPSPTTQL). Residues 30-49 (SSGVHASSPSHSQGSSSQSG) are compositionally biased toward low complexity. The stretch at 63–92 (ETANLIAVNEQLRKEIAENKQIQTNQMRAL) forms a coiled coil. Residues 107 to 126 (SISPHHGFPQRPPRGERRMQ) are disordered. C3H1-type zinc fingers lie at residues 130–158 (SYKT…HGEE) and 172–200 (KYKT…HPDN). A disordered region spans residues 235–268 (NTRNSYNQQPPPMGGLEMQSSPMKSSSDSSHMRS). Residues 252–268 (MQSSPMKSSSDSSHMRS) are compositionally biased toward low complexity.

In terms of tissue distribution, exclusively expressed in the hermaphrodite gonad. Weakly distributed throughout gonadal oocytes from the mitotic stage to the developing diakinesis stage, with expression restricted to the distal region of the gonad.

Functionally, zinc-finger protein that may play a role in oocyte maturation and fertility. The chain is CCCH-type zinc finger protein moe-3 from Caenorhabditis elegans.